The following is a 253-amino-acid chain: Triosephosphate isomerase (253 aa).

9 to 11 (NWK) serves as a coordination point for substrate. The active-site Electrophile is histidine 98. The active-site Proton acceptor is the glutamate 170. Substrate-binding positions include glycine 176, serine 216, and 237–238 (GG).

Belongs to the triosephosphate isomerase family. Homodimer.

The protein resides in the cytoplasm. The enzyme catalyses D-glyceraldehyde 3-phosphate = dihydroxyacetone phosphate. It functions in the pathway carbohydrate biosynthesis; gluconeogenesis. The protein operates within carbohydrate degradation; glycolysis; D-glyceraldehyde 3-phosphate from glycerone phosphate: step 1/1. Its function is as follows. Involved in the gluconeogenesis. Catalyzes stereospecifically the conversion of dihydroxyacetone phosphate (DHAP) to D-glyceraldehyde-3-phosphate (G3P). The chain is Triosephosphate isomerase from Amoebophilus asiaticus (strain 5a2).